The sequence spans 365 residues: Holliday junction branch migration complex subunit RuvB (365 aa).

The tract at residues 1 to 191 is large ATPase domain (RuvB-L); that stretch reads MSPELGGGYD…FGFTAHMDFY (191 aa). Residues leucine 30, arginine 31, glycine 72, lysine 75, threonine 76, serine 77, 138–140, arginine 181, tyrosine 191, and arginine 228 contribute to the ATP site; that span reads EDF. Threonine 76 provides a ligand contact to Mg(2+). Residues 192 to 262 are small ATPAse domain (RuvB-S); sequence EPAELKQILM…IAHAALAVYD (71 aa). Residues 265 to 365 are head domain (RuvB-H); that stretch reads QLGLDRLDRS…QASLFDPEDP (101 aa). The DNA site is built by arginine 320 and arginine 325.

It belongs to the RuvB family. Homohexamer. Forms an RuvA(8)-RuvB(12)-Holliday junction (HJ) complex. HJ DNA is sandwiched between 2 RuvA tetramers; dsDNA enters through RuvA and exits via RuvB. An RuvB hexamer assembles on each DNA strand where it exits the tetramer. Each RuvB hexamer is contacted by two RuvA subunits (via domain III) on 2 adjacent RuvB subunits; this complex drives branch migration. In the full resolvosome a probable DNA-RuvA(4)-RuvB(12)-RuvC(2) complex forms which resolves the HJ.

Its subcellular location is the cytoplasm. The enzyme catalyses ATP + H2O = ADP + phosphate + H(+). Its function is as follows. The RuvA-RuvB-RuvC complex processes Holliday junction (HJ) DNA during genetic recombination and DNA repair, while the RuvA-RuvB complex plays an important role in the rescue of blocked DNA replication forks via replication fork reversal (RFR). RuvA specifically binds to HJ cruciform DNA, conferring on it an open structure. The RuvB hexamer acts as an ATP-dependent pump, pulling dsDNA into and through the RuvAB complex. RuvB forms 2 homohexamers on either side of HJ DNA bound by 1 or 2 RuvA tetramers; 4 subunits per hexamer contact DNA at a time. Coordinated motions by a converter formed by DNA-disengaged RuvB subunits stimulates ATP hydrolysis and nucleotide exchange. Immobilization of the converter enables RuvB to convert the ATP-contained energy into a lever motion, pulling 2 nucleotides of DNA out of the RuvA tetramer per ATP hydrolyzed, thus driving DNA branch migration. The RuvB motors rotate together with the DNA substrate, which together with the progressing nucleotide cycle form the mechanistic basis for DNA recombination by continuous HJ branch migration. Branch migration allows RuvC to scan DNA until it finds its consensus sequence, where it cleaves and resolves cruciform DNA. The chain is Holliday junction branch migration complex subunit RuvB from Rhodococcus opacus (strain B4).